We begin with the raw amino-acid sequence, 462 residues long: UDP-N-acetylmuramoylalanine--D-glutamate ligase (462 aa).

Gly118 to Thr124 contributes to the ATP binding site.

This sequence belongs to the MurCDEF family.

The protein resides in the cytoplasm. The catalysed reaction is UDP-N-acetyl-alpha-D-muramoyl-L-alanine + D-glutamate + ATP = UDP-N-acetyl-alpha-D-muramoyl-L-alanyl-D-glutamate + ADP + phosphate + H(+). It functions in the pathway cell wall biogenesis; peptidoglycan biosynthesis. Cell wall formation. Catalyzes the addition of glutamate to the nucleotide precursor UDP-N-acetylmuramoyl-L-alanine (UMA). In Anaeromyxobacter dehalogenans (strain 2CP-C), this protein is UDP-N-acetylmuramoylalanine--D-glutamate ligase.